Reading from the N-terminus, the 640-residue chain is 1-deoxy-D-xylulose-5-phosphate synthase (640 aa).

Thiamine diphosphate-binding positions include His79 and 120–122 (GHS). Asp151 provides a ligand contact to Mg(2+). Residues 152 to 153 (GA), Asn180, Tyr287, and Glu369 each bind thiamine diphosphate. Residue Asn180 participates in Mg(2+) binding.

The protein belongs to the transketolase family. DXPS subfamily. As to quaternary structure, homodimer. Requires Mg(2+) as cofactor. The cofactor is thiamine diphosphate.

It catalyses the reaction D-glyceraldehyde 3-phosphate + pyruvate + H(+) = 1-deoxy-D-xylulose 5-phosphate + CO2. It participates in metabolic intermediate biosynthesis; 1-deoxy-D-xylulose 5-phosphate biosynthesis; 1-deoxy-D-xylulose 5-phosphate from D-glyceraldehyde 3-phosphate and pyruvate: step 1/1. In terms of biological role, catalyzes the acyloin condensation reaction between C atoms 2 and 3 of pyruvate and glyceraldehyde 3-phosphate to yield 1-deoxy-D-xylulose-5-phosphate (DXP). The protein is 1-deoxy-D-xylulose-5-phosphate synthase of Thioalkalivibrio sulfidiphilus (strain HL-EbGR7).